A 405-amino-acid polypeptide reads, in one-letter code: L-rhamnonate dehydratase (405 aa).

Substrate-binding residues include histidine 33 and arginine 59. Mg(2+)-binding residues include aspartate 226, glutamate 252, and glutamate 280. The Proton acceptor role is filled by histidine 329. Glutamate 349 is a binding site for substrate.

The protein belongs to the mandelate racemase/muconate lactonizing enzyme family. RhamD subfamily. Homooctamer; tetramer of dimers. Requires Mg(2+) as cofactor.

It carries out the reaction L-rhamnonate = 2-dehydro-3-deoxy-L-rhamnonate + H2O. In terms of biological role, catalyzes the dehydration of L-rhamnonate to 2-keto-3-deoxy-L-rhamnonate (KDR). The sequence is that of L-rhamnonate dehydratase from Escherichia coli O6:H1 (strain CFT073 / ATCC 700928 / UPEC).